A 237-amino-acid chain; its full sequence is Ergosterol biosynthesis protein 29 (237 aa).

A helical transmembrane segment spans residues 36–56; sequence ITLFLIVVGTLAFFNELYITI.

It localises to the endoplasmic reticulum membrane. In terms of biological role, part of the third module of ergosterol biosynthesis pathway that includes the late steps of the pathway. ERG29 regulates the activity of the iron-containing C4-methylsterol oxidase ERG25. The third module or late pathway involves the ergosterol synthesis itself through consecutive reactions that mainly occur in the endoplasmic reticulum (ER) membrane. Firstly, the squalene synthase ERG9 catalyzes the condensation of 2 farnesyl pyrophosphate moieties to form squalene, which is the precursor of all steroids. Squalene synthase is crucial for balancing the incorporation of farnesyl diphosphate (FPP) into sterol and nonsterol isoprene synthesis. Secondly, the squalene epoxidase ERG1 catalyzes the stereospecific oxidation of squalene to (S)-2,3-epoxysqualene, which is considered to be a rate-limiting enzyme in steroid biosynthesis. Then, the lanosterol synthase ERG7 catalyzes the cyclization of (S)-2,3 oxidosqualene to lanosterol, a reaction that forms the sterol core. In the next steps, lanosterol is transformed to zymosterol through a complex process involving various demethylation, reduction and desaturation reactions. The lanosterol 14-alpha-demethylase ERG11 (also known as CYP51) catalyzes C14-demethylation of lanosterol to produce 4,4'-dimethyl cholesta-8,14,24-triene-3-beta-ol, which is critical for ergosterol biosynthesis. The C-14 reductase ERG24 reduces the C14=C15 double bond of 4,4-dimethyl-cholesta-8,14,24-trienol to produce 4,4-dimethyl-cholesta-8,24-dienol. 4,4-dimethyl-cholesta-8,24-dienol is substrate of the C-4 demethylation complex ERG25-ERG26-ERG27 in which ERG25 catalyzes the three-step monooxygenation required for the demethylation of 4,4-dimethyl and 4alpha-methylsterols, ERG26 catalyzes the oxidative decarboxylation that results in a reduction of the 3-beta-hydroxy group at the C-3 carbon to an oxo group, and ERG27 is responsible for the reduction of the keto group on the C-3. ERG28 has a role as a scaffold to help anchor ERG25, ERG26 and ERG27 to the endoplasmic reticulum and ERG29 regulates the activity of the iron-containing C4-methylsterol oxidase ERG25. Then, the sterol 24-C-methyltransferase ERG6 catalyzes the methyl transfer from S-adenosyl-methionine to the C-24 of zymosterol to form fecosterol. The C-8 sterol isomerase ERG2 catalyzes the reaction which results in unsaturation at C-7 in the B ring of sterols and thus converts fecosterol to episterol. The sterol-C5-desaturase ERG3 then catalyzes the introduction of a C-5 double bond in the B ring to produce 5-dehydroepisterol. The C-22 sterol desaturase ERG5 further converts 5-dehydroepisterol into ergosta-5,7,22,24(28)-tetraen-3beta-ol by forming the C-22(23) double bond in the sterol side chain. Finally, ergosta-5,7,22,24(28)-tetraen-3beta-ol is substrate of the C-24(28) sterol reductase ERG4 to produce ergosterol. Functionally, plays a role in maintaining mitochondrial and plasma membrane integrity and consequently impacting the iron homeostasis, respiratory metabolism and antioxidant response. The sequence is that of Ergosterol biosynthesis protein 29 from Saccharomyces cerevisiae (strain ATCC 204508 / S288c) (Baker's yeast).